The following is a 122-amino-acid chain: uncharacterized protein (122 aa).

Its subcellular location is the mitochondrion. This is an uncharacterized protein from Arabidopsis thaliana (Mouse-ear cress).